Here is a 102-residue protein sequence, read N- to C-terminus: Large ribosomal subunit protein bL21 (102 aa).

This sequence belongs to the bacterial ribosomal protein bL21 family. As to quaternary structure, part of the 50S ribosomal subunit. Contacts protein L20.

In terms of biological role, this protein binds to 23S rRNA in the presence of protein L20. In Pelobacter propionicus (strain DSM 2379 / NBRC 103807 / OttBd1), this protein is Large ribosomal subunit protein bL21.